Consider the following 266-residue polypeptide: Glucosamine-6-phosphate deaminase (266 aa).

Aspartate 72 (proton acceptor; for enolization step) is an active-site residue. Aspartate 141 acts as the For ring-opening step in catalysis. Histidine 143 serves as the catalytic Proton acceptor; for ring-opening step. The For ring-opening step role is filled by glutamate 148.

This sequence belongs to the glucosamine/galactosamine-6-phosphate isomerase family. NagB subfamily. As to quaternary structure, homohexamer; trimer of disulfide-linked dimers.

The enzyme catalyses alpha-D-glucosamine 6-phosphate + H2O = beta-D-fructose 6-phosphate + NH4(+). Its pathway is amino-sugar metabolism; N-acetylneuraminate degradation; D-fructose 6-phosphate from N-acetylneuraminate: step 5/5. Its activity is regulated as follows. Allosterically activated by N-acetylglucosamine 6-phosphate (GlcNAc6P). Its function is as follows. Catalyzes the reversible isomerization-deamination of glucosamine 6-phosphate (GlcN6P) to form fructose 6-phosphate (Fru6P) and ammonium ion. This Shigella dysenteriae serotype 1 (strain Sd197) protein is Glucosamine-6-phosphate deaminase.